The sequence spans 171 residues: Ribosome maturation factor RimM (171 aa).

Residues 94 to 168 (NDEFYKDELI…MTIVPPEIVG (75 aa)) form the PRC barrel domain.

Belongs to the RimM family. Binds ribosomal protein uS19.

Its subcellular location is the cytoplasm. In terms of biological role, an accessory protein needed during the final step in the assembly of 30S ribosomal subunit, possibly for assembly of the head region. Essential for efficient processing of 16S rRNA. May be needed both before and after RbfA during the maturation of 16S rRNA. It has affinity for free ribosomal 30S subunits but not for 70S ribosomes. The chain is Ribosome maturation factor RimM from Anaplasma phagocytophilum (strain HZ).